Here is a 329-residue protein sequence, read N- to C-terminus: MKNNYTSLKSPLDEEDELKTDHEIDLEKGPLPEYDSEEEGALPPYSDHALVNNPPNTHRENNPSRSTDNSSPFLIKLLISFTPIYVLNVLAICYLTYKDAFFKDYGAAEWTLFGFWCLVCTLALIFLTYFYETWVKAVKVTVISLAKCVKVISIGLFNIRREMMIIIWILWLIICCILFVYIKSGDLILNKALICSTCTISAVLLLIVSSVCIPFWTFERTLAKLAKVLLLQSGIVLVLNGTMFLRGKHFERIGCEIEASVLFIMGNVLFLCEMECPGALIRTRNSIRNGIAFILGGIGNAMMGLANAIRGANDNNDIPLGEMDVESEV.

A disordered region spans residues 1–68 (MKNNYTSLKS…RENNPSRSTD (68 aa)). The span at 19 to 30 (KTDHEIDLEKGP) shows a compositional bias: basic and acidic residues. Transmembrane regions (helical) follow at residues 73 to 95 (FLIK…ICYL), 110 to 132 (WTLF…YFYE), 165 to 182 (IIIW…FVYI), 192 to 214 (ALIC…VCIP), and 290 to 312 (GIAF…IRGA).

Belongs to the WTF family. In terms of assembly, homomer. Interacts with other proteins that exhibit high sequence similarity.

It localises to the spore membrane. The protein resides in the vacuole membrane. Functionally, acts as a suppressor component of the dual wtf meiotic drive system, and can suppress but not confer meiotic drive by compatible poisons. Wtf meiotic drive systems promote unequal transmission of alleles from the parental zygote to progeny spores by encoding a poison and an antidote from the same locus; the poison is trans-acting and forms toxic aggregates in all spores within an ascus, wherease the antidote is spore-specific and targets aggregates for degradation by the vacuole. Meiotic drive by wtf systems therefore lead to poisoning of all progeny that do not inherit the dual poison/antidote allele, or express a compatible antidote. This Schizosaccharomyces pombe (strain 972 / ATCC 24843) (Fission yeast) protein is Meiotic drive suppressor wtf21.